The following is a 249-amino-acid chain: MRILISNDDGVTAPGIAALHAALVDYAECAVIAPDQDKSGASSSLTLDRPLHPQTLANGFISLNGTPTDCVHLGLNGLLPQTPDMVVSGINLGANLGDDVLYSGTVAAALEGRFLGGTSLAFSLLSRQPDNLPTAAYIARRLVEAQSRLVLPPRTVLNVNIPNLPLEHIRGIQLTRLGHRARAAAPTKVVNPRGKEGYWIAVAGDAEDGGPGTDFHAVMQGYVSITPLQLDRTFNDAFEQLDGWLEGLL.

The a divalent metal cation site is built by aspartate 8, aspartate 9, serine 39, and asparagine 91.

The protein belongs to the SurE nucleotidase family. The cofactor is a divalent metal cation.

The protein localises to the cytoplasm. The catalysed reaction is a ribonucleoside 5'-phosphate + H2O = a ribonucleoside + phosphate. Nucleotidase that shows phosphatase activity on nucleoside 5'-monophosphates. This chain is 5'-nucleotidase SurE, found in Pseudomonas putida (strain ATCC 700007 / DSM 6899 / JCM 31910 / BCRC 17059 / LMG 24140 / F1).